We begin with the raw amino-acid sequence, 165 residues long: 2-C-methyl-D-erythritol 2,4-cyclodiphosphate synthase (165 aa).

A divalent metal cation-binding residues include Asp13 and His15. Residues 13–15 (DRH) and 39–40 (HS) each bind 4-CDP-2-C-methyl-D-erythritol 2-phosphate. His47 is a binding site for a divalent metal cation. Residues 61–63 (DIG) and Phe141 contribute to the 4-CDP-2-C-methyl-D-erythritol 2-phosphate site.

The protein belongs to the IspF family. Homotrimer. The cofactor is a divalent metal cation.

It catalyses the reaction 4-CDP-2-C-methyl-D-erythritol 2-phosphate = 2-C-methyl-D-erythritol 2,4-cyclic diphosphate + CMP. It participates in isoprenoid biosynthesis; isopentenyl diphosphate biosynthesis via DXP pathway; isopentenyl diphosphate from 1-deoxy-D-xylulose 5-phosphate: step 4/6. Functionally, involved in the biosynthesis of isopentenyl diphosphate (IPP) and dimethylallyl diphosphate (DMAPP), two major building blocks of isoprenoid compounds. Catalyzes the conversion of 4-diphosphocytidyl-2-C-methyl-D-erythritol 2-phosphate (CDP-ME2P) to 2-C-methyl-D-erythritol 2,4-cyclodiphosphate (ME-CPP) with a corresponding release of cytidine 5-monophosphate (CMP). In Thermotoga maritima (strain ATCC 43589 / DSM 3109 / JCM 10099 / NBRC 100826 / MSB8), this protein is 2-C-methyl-D-erythritol 2,4-cyclodiphosphate synthase.